A 398-amino-acid chain; its full sequence is Riboflavin transporter RfnT (398 aa).

The next 12 membrane-spanning stretches (helical) occupy residues Ile-13–Val-35, Leu-45–Phe-67, Arg-74–Ala-91, Ile-95–Val-117, Ile-137–Ile-156, Met-166–Leu-188, Val-220–Val-242, Ala-252–Thr-274, Ile-281–Phe-300, Phe-305–Thr-324, Phe-345–Trp-367, and Trp-372–Leu-389.

Belongs to the major facilitator superfamily.

The protein resides in the cell membrane. Functionally, transports riboflavin into the cell. This is Riboflavin transporter RfnT from Brucella anthropi (strain ATCC 49188 / DSM 6882 / CCUG 24695 / JCM 21032 / LMG 3331 / NBRC 15819 / NCTC 12168 / Alc 37) (Ochrobactrum anthropi).